The chain runs to 256 residues: Leucyl/phenylalanyl-tRNA--protein transferase (256 aa).

The interval 1–21 (MIPWLPDDSDSAPFPPTRLAL) is disordered.

The protein belongs to the L/F-transferase family.

The protein resides in the cytoplasm. It carries out the reaction N-terminal L-lysyl-[protein] + L-leucyl-tRNA(Leu) = N-terminal L-leucyl-L-lysyl-[protein] + tRNA(Leu) + H(+). It catalyses the reaction N-terminal L-arginyl-[protein] + L-leucyl-tRNA(Leu) = N-terminal L-leucyl-L-arginyl-[protein] + tRNA(Leu) + H(+). The enzyme catalyses L-phenylalanyl-tRNA(Phe) + an N-terminal L-alpha-aminoacyl-[protein] = an N-terminal L-phenylalanyl-L-alpha-aminoacyl-[protein] + tRNA(Phe). Functionally, functions in the N-end rule pathway of protein degradation where it conjugates Leu, Phe and, less efficiently, Met from aminoacyl-tRNAs to the N-termini of proteins containing an N-terminal arginine or lysine. The chain is Leucyl/phenylalanyl-tRNA--protein transferase from Leptothrix cholodnii (strain ATCC 51168 / LMG 8142 / SP-6) (Leptothrix discophora (strain SP-6)).